A 104-amino-acid polypeptide reads, in one-letter code: N(2)-fixation sustaining protein CowN (104 aa).

It belongs to the CowN family.

Its function is as follows. Is required to sustain N(2)-dependent growth in the presence of low levels of carbon monoxide (CO). Probably acts by protecting the N(2) fixation ability of the nitrogenase complex, which is inactivated in the presence of CO. The protein is N(2)-fixation sustaining protein CowN of Arcobacter nitrofigilis (strain ATCC 33309 / DSM 7299 / CCUG 15893 / LMG 7604 / NCTC 12251 / CI) (Campylobacter nitrofigilis).